A 52-amino-acid polypeptide reads, in one-letter code: Lantibiotic gallidermin (52 aa).

The propeptide occupies 1–30 (MEAVKEKNELFDLDVKVNAKESNDSGAEPR). Positions 33-37 (SKFLC) form a cross-link, lanthionine (Ser-Cys). Positions 38–41 (TPGC) form a cross-link, beta-methyllanthionine (Thr-Cys). Position 44 is a (Z)-2,3-didehydrobutyrine (T44). Residues 46–51 (SFNSYC) constitute a cross-link (lanthionine (Ser-Cys)). Residues 49-52 (SYCC) constitute a cross-link (S-(2-aminovinyl)-D-cysteine (Ser-Cys)).

The protein belongs to the type A lantibiotic family. In terms of processing, maturation of lantibiotics involves the enzymatic conversion of Thr, and Ser into dehydrated AA and the formation of thioether bonds with cysteine. The C-terminal lanthionine undergoes decarboxylation. This is followed by membrane translocation and cleavage of the modified precursor. The structure of the 2,3-didehydrobutyrine is not discussed in PubMed:1932575. However, in Fig. 5 the NMR model appears to have the Z-isomer.

In terms of biological role, lanthionine-containing peptide antibiotic (lantibiotic) active on Gram-positive bacteria. The bactericidal activity of lantibiotics is based on depolarization of energized bacterial cytoplasmic membranes, initiated by the formation of aqueous transmembrane pores. The polypeptide is Lantibiotic gallidermin (gdmA) (Staphylococcus gallinarum).